Consider the following 94-residue polypeptide: Venom protein 59.1 (94 aa).

The signal sequence occupies residues 1 to 22 (MNSREMFCVFILFASFFYCSYA). 6 disulfide bridges follow: Cys-19/Cys-47, Cys-26/Cys-49, Cys-32/Cys-50, Cys-38/Cys-53, Cys-61/Cys-76, and Cys-70/Cys-91. The IGFBP N-terminal domain maps to 23 to 94 (EQECNCDKSC…GEALEICLRA (72 aa)).

Expressed by the venom gland.

Its subcellular location is the secreted. This Lychas mucronatus (Chinese swimming scorpion) protein is Venom protein 59.1.